Reading from the N-terminus, the 403-residue chain is Leu/Ile/Val-binding protein homolog 8 (403 aa).

Residues 1–26 form the signal peptide; the sequence is MRLSRLLIGASLGVALSSTVFTAALA.

This sequence belongs to the leucine-binding protein family.

In terms of biological role, component of an amino-acid transport system. In Brucella abortus (strain 2308), this protein is Leu/Ile/Val-binding protein homolog 8.